The following is a 590-amino-acid chain: MNIFAAFEERIGEALASLTRAGQLPEGLDLGRVVVEPPRDPSHGDLATNAALVLAKEARTNPKALAERLAAELRSDPRVTEASVAGPGFLNLRLAPQVYGDVVRAALRAGEAFGRGAKQPGLVNVEYVSANPTGPMHVGHGRGAVFGDALANLLVAAGREVVREYYINDAGAQVDVLARSAFLRYREALGEEIGTIPEGLYPGDYLKPVGAMLAKTHGRSLLGKPEAEWLPLVREAAIGAMMERIREDLAALGIRHDVFFSERTLQEGGKEGGEGGAVARLIEALRARDLVYVGRLPPPKGQLPEDWEDRDQTLFRSTAFGDDIDRPLLKSDGSYTYFASDIAYHASKVERGATELIDVLGADHGGYVKRMQAAVRAVSDGRASLDVKLCQLVRLLRGGEPVKMSKRAGEFVTLREVIDEVGRDPVRFMMLYRKNDATLDFDLAKVVEQSKDNPVFYVQYAHARTASVFRQAREAFPGEDLSAEALAGADLSLLTDSGEAEIMRLIAQYPRVVESAGSAHEPHRLAFYLYELASAFHSFWNKGKDLPQLRFVNQTDRMSTLSRLALVAALRGVLASGLGILGVTAPDEMR.

A 'HIGH' region motif is present at residues 130-140 (ANPTGPMHVGH).

This sequence belongs to the class-I aminoacyl-tRNA synthetase family. Monomer.

Its subcellular location is the cytoplasm. The enzyme catalyses tRNA(Arg) + L-arginine + ATP = L-arginyl-tRNA(Arg) + AMP + diphosphate. The protein is Arginine--tRNA ligase of Methylobacterium nodulans (strain LMG 21967 / CNCM I-2342 / ORS 2060).